Reading from the N-terminus, the 950-residue chain is MNTEAEQQLLHHARNGNAEEVRQLLETMARNEVIADINCKGRSKSNLGWTPLHLACYFGHRQVVQDLLKAGAEVNVLNDMGDTPLHRAAFTGRKELVMLLLEYNADTTIVNGSGQTAKEVTHAEEIRSMLEAVERTQQRKLEELLLAAAREGKTTELTALLNRPNPPDVNCSDQLGNTPLHCAAYRAHKQCALKLLRSGADPNLKNKNDQKPLDLAQGAEMKHILVGNKVIYKALKRYEGPLWKSSRFFGWRLFWVVLEHGVLSWYRKQPDAVHNIYRQGCKHLTQAVCTVKSTDSCLFFIKCFDDTIHGFRVPKNSLQQSREDWLEAIEEHSAYSTHYCSQDQLTDEEEEDTVSAADLKKSLEKAQSCQQRLDREISNFLKMIKECDMAKEMLPSFLQKVEVVSEASRETCVALTDCLNLFTKQEGVRNFKLEQEQEKNKILSEALETLATEHHELEQSLVKGSPPASILSEDEFYDALSDSESERSLSRLEAVTARSFEEEGEHLGSRKHRMSEEKDCGGGDALSNGIKKHRTSLPSPMFSRNDFSIWSILRKCIGMELSKITMPVIFNEPLSFLQRLTEYMEHTYLIHKASSLSDPVERMQCVAAFAVSAVASQWERTGKPFNPLLGETYELVRDDLGFRLISEQVSHHPPISAFHAEGLNNDFIFHGSIYPKLKFWGKSVEAEPKGTITLELLEHNEAYTWTNPTCCVHNIIVGKLWIEQYGNVEIINHKTGDKCVLNFKPCGLFGKELHKVEGYIQDKSKKKLCALYGKWTECLYSVDPATFDAYKKNDKKNTEEKKNSKQMSTSEELDEMPVPDSESVFIIPGSVLLWRIAPRPPNSAQMYNFTSFAMVLNEVDKDMESVIPKTDCRLRPDIRAMENGEIDQASEEKKRLEEKQRAARKNRSKSEEDWKTRWFHQGPNPYNGAQDWIYSGSYWDRNYFNLPDIY.

The interval 1 to 237 is interaction with RAB7A; it reads MNTEAEQQLL…NKVIYKALKR (237 aa). ANK repeat units follow at residues 47-76, 80-109, and 175-204; these read LGWT…EVNV, MGDT…DTTI, and LGNT…DPNL. The PH domain occupies 235–334; sequence LKRYEGPLWK…WLEAIEEHSA (100 aa). Residues 430–463 adopt a coiled-coil conformation; sequence NFKLEQEQEKNKILSEALETLATEHHELEQSLVK. The short motif at 469-485 is the FFAT element; sequence SILSEDEFYDALSDSES. Residue Ser499 is modified to Phosphoserine. Over residues 501–521 the composition is skewed to basic and acidic residues; the sequence is EEEGEHLGSRKHRMSEEKDCG. Disordered stretches follow at residues 501–527, 795–816, and 881–913; these read EEEG…DALS, KKNT…LDEM, and MENG…SEED. The stretch at 877 to 913 forms a coiled coil; sequence DIRAMENGEIDQASEEKKRLEEKQRAARKNRSKSEED. A compositionally biased stretch (basic and acidic residues) spans 890 to 901; that stretch reads SEEKKRLEEKQR.

The protein belongs to the OSBP family. Interacts (via FFAT motif) with VAPA and VAPB. Interacts with the GTP-bound form of RAB7A. Interacts with OAS1B. Interacts (via FFAT motif) with MOSPD2 (via MSP domain).

It is found in the late endosome. Binds phospholipids; exhibits strong binding to phosphatidic acid and weak binding to phosphatidylinositol 3-phosphate. Stabilizes GTP-bound RAB7A on late endosomes/lysosomes and alters functional properties of late endocytic compartments via its interaction with RAB7A. Binds 25-hydroxycholesterol and cholesterol. This chain is Oxysterol-binding protein-related protein 1, found in Homo sapiens (Human).